We begin with the raw amino-acid sequence, 382 residues long: ATP phosphoribosyltransferase regulatory subunit (382 aa).

It belongs to the class-II aminoacyl-tRNA synthetase family. HisZ subfamily. In terms of assembly, heteromultimer composed of HisG and HisZ subunits.

It localises to the cytoplasm. It participates in amino-acid biosynthesis; L-histidine biosynthesis; L-histidine from 5-phospho-alpha-D-ribose 1-diphosphate: step 1/9. In terms of biological role, required for the first step of histidine biosynthesis. May allow the feedback regulation of ATP phosphoribosyltransferase activity by histidine. The protein is ATP phosphoribosyltransferase regulatory subunit of Burkholderia pseudomallei (strain 1106a).